Here is a 475-residue protein sequence, read N- to C-terminus: MKHSHEEIRKIIPEMRRVQQIHFIGIGGAGMSGIAEILLNEGYQISGSDIADGVVTQRLAQAGAKIYIGHAEEHIKGASVVVVSSAIKDDNPELVASKQKRIPVIQRAQMLAEIMRFRHGIAVAGTHGKTTTTAMISMIYTQAKLDPTFVNGGLVKSAGKNAHLGASRYLIAEADESDASFLHLQPMVSVVTNMEPDHMDTYEGDFEKMKATYVKFLHNLPFYGLAVMCADDPVLMELVPKVGRQVITYGFSEQADYRIEDYEQTGFQGHYTVICPNNERINVLLNVPGKHNALNATAALAVAKEEGIANEAILEALADFQGAGRRFDQLGEFIRPNGKVRLVDDYGHHPTEVDVTIKAAREGWGDKRIVMIFQPHRYSRTRDLFDDFVQVLSLVDALIMLDVYAAGEAPIVGADSKSLCRSIRNLGKVDPILVSDTSQLGDVLDQIIQDGDLILAQGAGSVSKISRGLAESWKN.

125-131 (GTHGKTT) lines the ATP pocket.

This sequence belongs to the MurCDEF family.

It localises to the cytoplasm. It catalyses the reaction UDP-N-acetyl-alpha-D-muramate + L-alanine + ATP = UDP-N-acetyl-alpha-D-muramoyl-L-alanine + ADP + phosphate + H(+). It participates in cell wall biogenesis; peptidoglycan biosynthesis. Cell wall formation. The chain is UDP-N-acetylmuramate--L-alanine ligase from Haemophilus influenzae (strain 86-028NP).